We begin with the raw amino-acid sequence, 158 residues long: Large ribosomal subunit protein mL50 (158 aa).

It belongs to the mitochondrion-specific ribosomal protein mL50 family. Component of the mitochondrial ribosome large subunit (39S) which comprises a 16S rRNA and about 50 distinct proteins.

Its subcellular location is the mitochondrion. The protein is Large ribosomal subunit protein mL50 (MRPL50) of Pongo abelii (Sumatran orangutan).